The primary structure comprises 312 residues: Glycerol-3-phosphate dehydrogenase [NAD(P)+] (312 aa).

4 residues coordinate NADPH: tryptophan 11, arginine 30, arginine 31, and lysine 95. The sn-glycerol 3-phosphate site is built by lysine 95, glycine 123, and serine 125. Alanine 127 serves as a coordination point for NADPH. Positions 177, 230, 240, 241, and 242 each coordinate sn-glycerol 3-phosphate. Lysine 177 (proton acceptor) is an active-site residue. Residue arginine 241 coordinates NADPH. The NADPH site is built by valine 265 and glutamate 267.

It belongs to the NAD-dependent glycerol-3-phosphate dehydrogenase family.

The protein resides in the cytoplasm. The enzyme catalyses sn-glycerol 3-phosphate + NAD(+) = dihydroxyacetone phosphate + NADH + H(+). It catalyses the reaction sn-glycerol 3-phosphate + NADP(+) = dihydroxyacetone phosphate + NADPH + H(+). It functions in the pathway membrane lipid metabolism; glycerophospholipid metabolism. In terms of biological role, catalyzes the reduction of the glycolytic intermediate dihydroxyacetone phosphate (DHAP) to sn-glycerol 3-phosphate (G3P), the key precursor for phospholipid synthesis. The sequence is that of Glycerol-3-phosphate dehydrogenase [NAD(P)+] from Helicobacter pylori (strain P12).